We begin with the raw amino-acid sequence, 430 residues long: Tol-Pal system protein TolB (430 aa).

The signal sequence occupies residues 1-21 (MKQAFRVALGFFLLWASVLHA).

It belongs to the TolB family. As to quaternary structure, the Tol-Pal system is composed of five core proteins: the inner membrane proteins TolA, TolQ and TolR, the periplasmic protein TolB and the outer membrane protein Pal. They form a network linking the inner and outer membranes and the peptidoglycan layer.

The protein localises to the periplasm. Its function is as follows. Part of the Tol-Pal system, which plays a role in outer membrane invagination during cell division and is important for maintaining outer membrane integrity. TolB occupies a key intermediary position in the Tol-Pal system because it communicates directly with both membrane-embedded components, Pal in the outer membrane and TolA in the inner membrane. This chain is Tol-Pal system protein TolB, found in Sodalis glossinidius (strain morsitans).